The primary structure comprises 193 residues: NAD(P)H-quinone oxidoreductase subunit I (193 aa).

4Fe-4S ferredoxin-type domains lie at 55 to 84 (GRIH…VDWE) and 95 to 124 (KHYS…VTEE). Residues cysteine 64, cysteine 67, cysteine 70, cysteine 74, cysteine 104, cysteine 107, cysteine 110, and cysteine 114 each contribute to the [4Fe-4S] cluster site.

This sequence belongs to the complex I 23 kDa subunit family. As to quaternary structure, NDH-1 is composed of at least 11 different subunits. The cofactor is [4Fe-4S] cluster.

Its subcellular location is the cellular thylakoid membrane. The enzyme catalyses a plastoquinone + NADH + (n+1) H(+)(in) = a plastoquinol + NAD(+) + n H(+)(out). The catalysed reaction is a plastoquinone + NADPH + (n+1) H(+)(in) = a plastoquinol + NADP(+) + n H(+)(out). Its function is as follows. NDH-1 shuttles electrons from an unknown electron donor, via FMN and iron-sulfur (Fe-S) centers, to quinones in the respiratory and/or the photosynthetic chain. The immediate electron acceptor for the enzyme in this species is believed to be plastoquinone. Couples the redox reaction to proton translocation, and thus conserves the redox energy in a proton gradient. The protein is NAD(P)H-quinone oxidoreductase subunit I of Cyanothece sp. (strain PCC 7425 / ATCC 29141).